The following is a 1099-amino-acid chain: SLIT-ROBO Rho GTPase-activating protein 3 (1099 aa).

Residues 19–314 form the F-BAR domain; the sequence is AQIKEIRTQL…AVDNLDSRSD (296 aa). The segment at 205–225 is disordered; the sequence is HEDRPQRRSSVKKIEKMKEKR. The stretch at 352–392 forms a coiled coil; that stretch reads QTELLMRYHQLQSRLATLKIENEEVRKTLDATMQTLQDMLT. Positions 471–493 are disordered; that stretch reads ERAECGTTRPPCLPPKPQKMRRP. One can recognise a Rho-GAP domain in the interval 506-694; it reads GSMEAFIKDS…TIIIHHEAIF (189 aa). Residues 744 to 803 enclose the SH3 domain; the sequence is VEQIEAIAKFDYMGRSPRELSFKKGASLLLYHRASEDWWEGRHNGVDGLIPHQYIVVQDM. Over residues 809-820 the composition is skewed to polar residues; the sequence is DSLSQKADSEAS. Residues 809-847 are disordered; that stretch reads DSLSQKADSEASSGPLLDDKASSKNDLQSPTEHISDYGF. Ser817, Ser820, Ser821, Ser837, and Ser858 each carry phosphoserine. 2 disordered regions span residues 861–911 and 926–950; these read AAIP…SPEK and PDKKALSEGHSMRSTCGSTRHSSLG. A compositionally biased stretch (basic and acidic residues) spans 926–936; the sequence is PDKKALSEGHS. Residues 937–947 are compositionally biased toward polar residues; sequence MRSTCGSTRHS. Residues 952 to 987 are a coiled coil; it reads HKSLEAEALAEDIEKTMSTALHELRELERQNTVKQA. Position 954 is a phosphoserine (Ser954). Residues 995–1099 are disordered; that stretch reads LEPLKNPPGP…NSSADKSGTM (105 aa). 2 stretches are compositionally biased toward low complexity: residues 1026–1038 and 1060–1074; these read RRSSSSSTEMMTT and VRPVVQHRSSSSSSS. The span at 1089 to 1099 shows a compositional bias: polar residues; that stretch reads PNSSADKSGTM.

In terms of assembly, homodimer. Forms a heterooligomer with SRGAP1 and SRGAP2 through its F-BAR domain. Interacts with WASF1. Probably interacts with ROBO1. Interacts with FASLG. Highly expressed in adult and fetal brain. Expressed at low levels in kidney. Isoform 3 is expressed in the kidney but is absent in the brain.

In terms of biological role, GTPase-activating protein for RAC1 and perhaps Cdc42, but not for RhoA small GTPase. May attenuate RAC1 signaling in neurons. The polypeptide is SLIT-ROBO Rho GTPase-activating protein 3 (SRGAP3) (Homo sapiens (Human)).